Here is a 164-residue protein sequence, read N- to C-terminus: Respiratory growth induced protein 2 (164 aa).

The protein belongs to the RGI1 family.

It localises to the cytoplasm. Functionally, involved in the control of energetic metabolism and significantly contribute to cell fitness, especially under respiratory growth conditions. The polypeptide is Respiratory growth induced protein 2 (RGI2) (Saccharomyces cerevisiae (strain RM11-1a) (Baker's yeast)).